The chain runs to 374 residues: 4-galactosyl-N-acetylglucosaminide 3-alpha-L-fucosyltransferase FUT5 (374 aa).

At 1 to 15 the chain is on the cytoplasmic side; it reads MDPLGPAKPQWLWRR. Residues 16–34 form a helical; Signal-anchor for type II membrane protein membrane-spanning segment; that stretch reads CLAGLLFQLLVAVCFFSYL. The Lumenal portion of the chain corresponds to 35 to 374; sequence RVSQDHATGS…TVRSIAAWFT (340 aa). N60, N105, N167, and N198 each carry an N-linked (GlcNAc...) asparagine glycan.

It belongs to the glycosyltransferase 10 family.

Its subcellular location is the golgi apparatus. It localises to the golgi stack membrane. It catalyses the reaction a beta-D-galactosyl-(1-&gt;3)-N-acetyl-beta-D-glucosaminyl derivative + GDP-beta-L-fucose = a beta-D-galactosyl-(1-&gt;3)-[alpha-L-fucosyl-(1-&gt;4)]-N-acetyl-beta-D-glucosaminyl derivative + GDP + H(+). The enzyme catalyses an N-acetyl-alpha-neuraminyl-(2-&gt;3)-beta-D-galactosyl-(1-&gt;4)-N-acetyl-beta-D-glucosaminyl derivative + GDP-beta-L-fucose = an alpha-Neu5Ac-(2-&gt;3)-beta-D-Gal-(1-&gt;4)-[alpha-L-Fuc-(1-&gt;3)]-beta-D-GlcNAc derivative + GDP + H(+). The catalysed reaction is an alpha-Neu5Ac-(2-&gt;3)-beta-D-Gal-(1-&gt;4)-beta-D-GlcNAc-(1-&gt;3)-beta-D-Gal-(1-&gt;4)-[alpha-L-Fuc-(1-&gt;3)]-beta-D-GlcNAc derivative + GDP-beta-L-fucose = an alpha-Neu5Ac-(2-&gt;3)-beta-D-Gal-(1-&gt;4)-[alpha-L-Fuc-(1-&gt;3)]-beta-D-GlcNAc-(1-&gt;3)-beta-D-Gal-(1-&gt;4)-[alpha-L-Fuc-(1-&gt;3)]-beta-D-GlcNAc derivative + GDP + H(+). It carries out the reaction a beta-D-galactosyl-(1-&gt;4)-N-acetyl-beta-D-glucosaminyl derivative + GDP-beta-L-fucose = a beta-D-galactosyl-(1-&gt;4)-[alpha-L-fucosyl-(1-&gt;3)]-N-acetyl-beta-D-glucosaminyl derivative + GDP + H(+). It catalyses the reaction a neolactoside nLc4Cer + GDP-beta-L-fucose = a neolactoside III(3)-alpha-Fuc-nLc4Cer + GDP + H(+). The enzyme catalyses a neolactoside nLc6Cer + GDP-beta-L-fucose = beta-D-galactosyl-(1-&gt;4)-N-acetyl-beta-D-glucosaminyl-(1-&gt;3)-beta-D-galactosyl-(1-&gt;4)-[alpha-L-fucosyl-(1-&gt;3)]-N-acetyl-beta-D-glucosaminyl-(1-&gt;3)-beta-D-galactosyl-(1-&gt;4)-beta-D-glucosyl-(1&lt;-&gt;1')-ceramide + GDP + H(+). The catalysed reaction is a neolactoside nLc6Cer(d18:1(4E)) + GDP-beta-L-fucose = a neolactoside III(3)-alpha-Fuc-nLc6Cer(d18:1(4E)) + GDP + H(+). It carries out the reaction a neolactoside nLc4Cer(d18:1(4E)) + GDP-beta-L-fucose = a neolactoside III(3)-alpha-Fuc-nLc4Cer(d18:1(4E)) + GDP + H(+). It catalyses the reaction a neolactoside VI(3)-alpha-NeuNAc-nLc6Cer + GDP-beta-L-fucose = a neolactoside VI(3)-alpha-NeuAc,III(3)-alphaFuc-nLc6Cer + GDP + H(+). The enzyme catalyses beta-D-galactosyl-(1-&gt;4)-N-acetyl-D-glucosamine + GDP-beta-L-fucose = beta-D-galactosyl-(1-&gt;4)-[alpha-L-fucosyl-(1-&gt;3)]-N-acetyl-D-glucosamine + GDP + H(+). The catalysed reaction is N-acetyl-alpha-neuraminosyl-(2-&gt;3)-beta-D-galactosyl-(1-&gt;4)-N-acetyl-beta-D-glucosamine + GDP-beta-L-fucose = N-acetyl-alpha-neuraminosyl-(2-&gt;3)-beta-D-galactosyl-(1-&gt;4)-[alpha-L-fucosyl-(1-&gt;3)]-N-acetyl-beta-D-glucosamine + GDP + H(+). It carries out the reaction alpha-L-Fuc-(1-&gt;2)-beta-D-Gal-(1-&gt;4)-D-GlcNAc + GDP-beta-L-fucose = alpha-L-Fuc-(1-&gt;2)-beta-D-Gal-(1-&gt;4)-[alpha-L-Fuc-(1-&gt;3)]-D-GlcNAc + GDP + H(+). It catalyses the reaction an alpha-Neu5Ac-(2-&gt;3)-beta-D-Gal-(1-&gt;3)-D-GlcNAc derivative + GDP-beta-L-fucose = an alpha-Neu5Ac-(2-&gt;3)-beta-D-Gal-(1-&gt;3)-[alpha-L-Fuc-(1-&gt;4)]-beta-D-GlcNAc derivative + GDP + H(+). It functions in the pathway protein modification; protein glycosylation. Catalyzes preferentially the transfer of L-fucose, from a guanosine diphosphate-beta-L-fucose, to the N-acetyl-beta-D-glucosamine (GlcNAc) of an N-acetyllactosamine unit (type 2 chain) of an oligosaccharide, or a glycoprotein- and a glycolipid-linked N-acetyllactosamine unit via an alpha (1,3) linkage and participates in the surface expression of VIM-2, Lewis X/SSEA-1 and sialyl Lewis X antigens. Preferentially transfers fucose to the GlcNAc of an internal N-acetyllactosamine unit of a poly-N-acetyllactosamine chain acceptor substrate. Also catalyzes to a lesser extend the transfer of L-fucose to the GlcNAc of a type 1 (beta-D-galactosyl-(1-&gt;3)-N-acetyl-beta-D-glucosaminyl) or H-type 1 (alpha-L-Fuc-(1-&gt;2)-beta-D-Gal-(1-&gt;3)-D-GlcNAc) chain oligosaccharide via an alpha (1,4) linkage. Preferentially catalyzes sialylated type 2 oligosaccharide acceptors over neutral type 2 or H type 2 (alpha-L-Fuc-(1-&gt;2)-beta-D-Gal-(1-&gt;4)-D-GlcNAc) oligosaccharide acceptors. Lactose-based structures are also acceptor substrates. The polypeptide is 4-galactosyl-N-acetylglucosaminide 3-alpha-L-fucosyltransferase FUT5 (Gorilla gorilla gorilla (Western lowland gorilla)).